A 160-amino-acid chain; its full sequence is uncharacterized protein (160 aa).

Residues 69–145 (NQLLNMMAQA…EQREHVKEQR (77 aa)) adopt a coiled-coil conformation. Disordered regions lie at residues 82-109 (GVRL…LKNA) and 129-160 (KKKQ…HRGK). Residues 86-99 (QGRRQKKINPKRLQ) show a composition bias toward basic residues. Over residues 133-146 (IMKEQREHVKEQRY) the composition is skewed to basic and acidic residues. Positions 147-160 (MLKKQKAKKKHRGK) are enriched in basic residues.

This is an uncharacterized protein from Bacillus subtilis (strain 168).